The chain runs to 361 residues: Rhomboid domain-containing protein 2 (361 aa).

5 helical membrane-spanning segments follow: residues 19–39, 63–83, 100–120, 158–178, and 182–202; these read SATFFTALLSLLVSGPRLFLL, LVTYIFVYENPVSLLCGAIII, CFFTLIFTVFSAIIYLSFESV, FGVVVPSVLVPWLLLCASWLI, and SFLSNVSGLLIGLSYGLTYCY. Disordered regions lie at residues 265–287 and 318–361; these read PSYPVTQMQHASGQKLASWPPGH and PASA…VAMP. Composition is skewed to polar residues over residues 267–276 and 318–328; these read YPVTQMQHAS and PASAGTSQGVQ.

This sequence belongs to the peptidase S54 family. As to quaternary structure, might form homotrimers; these trimers are only formed in retina. As to expression, widely expressed, including in retina and brain (at protein level), as well as in kidney, testis and ovary. Expressed in all layers of the retina, including inner segments of photoreceptor cells and ganglion cells (at protein level).

It is found in the golgi apparatus. The protein localises to the cis-Golgi network membrane. The protein is Rhomboid domain-containing protein 2 (Rhbdd2) of Mus musculus (Mouse).